Reading from the N-terminus, the 381-residue chain is Anhydro-N-acetylmuramic acid kinase (381 aa).

22–29 is an ATP binding site; that stretch reads GTSIDGID.

This sequence belongs to the anhydro-N-acetylmuramic acid kinase family.

The catalysed reaction is 1,6-anhydro-N-acetyl-beta-muramate + ATP + H2O = N-acetyl-D-muramate 6-phosphate + ADP + H(+). The protein operates within amino-sugar metabolism; 1,6-anhydro-N-acetylmuramate degradation. Its pathway is cell wall biogenesis; peptidoglycan recycling. In terms of biological role, catalyzes the specific phosphorylation of 1,6-anhydro-N-acetylmuramic acid (anhMurNAc) with the simultaneous cleavage of the 1,6-anhydro ring, generating MurNAc-6-P. Is required for the utilization of anhMurNAc either imported from the medium or derived from its own cell wall murein, and thus plays a role in cell wall recycling. The protein is Anhydro-N-acetylmuramic acid kinase of Xylella fastidiosa (strain Temecula1 / ATCC 700964).